A 150-amino-acid polypeptide reads, in one-letter code: Large ribosomal subunit protein uL15 (150 aa).

Residues Met1–Glu51 form a disordered region. Gly residues predominate over residues Arg21–Ser31.

Belongs to the universal ribosomal protein uL15 family. As to quaternary structure, part of the 50S ribosomal subunit.

Binds to the 23S rRNA. This is Large ribosomal subunit protein uL15 from Cytophaga hutchinsonii (strain ATCC 33406 / DSM 1761 / CIP 103989 / NBRC 15051 / NCIMB 9469 / D465).